We begin with the raw amino-acid sequence, 218 residues long: N-(5'-phosphoribosyl)anthranilate isomerase (218 aa).

The protein belongs to the TrpF family.

The enzyme catalyses N-(5-phospho-beta-D-ribosyl)anthranilate = 1-(2-carboxyphenylamino)-1-deoxy-D-ribulose 5-phosphate. The protein operates within amino-acid biosynthesis; L-tryptophan biosynthesis; L-tryptophan from chorismate: step 3/5. In Rhodopseudomonas palustris (strain BisB5), this protein is N-(5'-phosphoribosyl)anthranilate isomerase.